A 225-amino-acid chain; its full sequence is AA9 family lytic polysaccharide monooxygenase A (225 aa).

An N-terminal signal peptide occupies residues 1–17 (MLTTTFALLTAALGVSA). Cu(2+) contacts are provided by H18 and H85. 2 disulfides stabilise this stretch: C55-C173 and C143-C225. 2 residues coordinate O2: H159 and Q168. Y170 lines the Cu(2+) pocket.

It belongs to the polysaccharide monooxygenase AA9 family. Requires Cu(2+) as cofactor.

Its subcellular location is the secreted. The enzyme catalyses [(1-&gt;4)-beta-D-glucosyl]n+m + reduced acceptor + O2 = 4-dehydro-beta-D-glucosyl-[(1-&gt;4)-beta-D-glucosyl]n-1 + [(1-&gt;4)-beta-D-glucosyl]m + acceptor + H2O.. Its activity is regulated as follows. Is able to utilize various natural phenolic compounds as reducing agents. Most of these reducing agents are present in plants, either free or as lignin building blocks, such as sinapic acid, or as flavonoids such as catechin and dopamine. Phenolic compounds with 1,2-benzenediol and 1,2,3-benzenetriol moieties yield the highest release of oxidized and non-oxidized glucooligosaccharides from cellulose compared to monophenols or sulfur-containing compounds. In terms of biological role, lytic polysaccharide monooxygenase (LPMO) that depolymerizes crystalline and amorphous polysaccharides via the oxidation of scissile alpha- or beta-(1-4)-glycosidic bonds, yielding C1 or C4 oxidation products. Catalysis by LPMOs requires the reduction of the active-site copper from Cu(II) to Cu(I) by a reducing agent and H(2)O(2) or O(2) as a cosubstrate. Shows oxidative cleavage of xylan in addition to cellulose. Shows a strong synergistic effect with endoglucanase I (EGI) with a 16-fold higher release of detected oligosaccharides. In Thermothelomyces thermophilus (strain ATCC 42464 / BCRC 31852 / DSM 1799) (Sporotrichum thermophile), this protein is AA9 family lytic polysaccharide monooxygenase A.